Reading from the N-terminus, the 139-residue chain is Small ribosomal subunit protein uS12 (139 aa).

A disordered region spans residues 12–55 (RVDKVKKSDSPALNKGYNSFKKSQTDVSSPQKRGVCTRVGTMTP). Over residues 27–42 (GYNSFKKSQTDVSSPQ) the composition is skewed to polar residues. The residue at position 102 (aspartate 102) is a 3-methylthioaspartic acid. Residues 119–139 (GVQNRMQGRSKYGTKKPKDKK) are disordered. Basic residues predominate over residues 130–139 (YGTKKPKDKK).

Belongs to the universal ribosomal protein uS12 family. As to quaternary structure, part of the 30S ribosomal subunit. Contacts proteins S8 and S17. May interact with IF1 in the 30S initiation complex.

Functionally, with S4 and S5 plays an important role in translational accuracy. Its function is as follows. Interacts with and stabilizes bases of the 16S rRNA that are involved in tRNA selection in the A site and with the mRNA backbone. Located at the interface of the 30S and 50S subunits, it traverses the body of the 30S subunit contacting proteins on the other side and probably holding the rRNA structure together. The combined cluster of proteins S8, S12 and S17 appears to hold together the shoulder and platform of the 30S subunit. This Shouchella clausii (strain KSM-K16) (Alkalihalobacillus clausii) protein is Small ribosomal subunit protein uS12.